Consider the following 710-residue polypeptide: Assimilatory nitrate reductase catalytic subunit (710 aa).

The 59-residue stretch at 19–77 folds into the 4Fe-4S Mo/W bis-MGD-type domain; that stretch reads EKTYDTQCPFCSMQCKMQLVEQTIVTRKKYTAIGIDNPTTQGRLCIKGMNAHQHALNSS. Positions 26, 29, 33, and 63 each coordinate [4Fe-4S] cluster.

This sequence belongs to the prokaryotic molybdopterin-containing oxidoreductase family. [4Fe-4S] cluster serves as cofactor. Requires Mo-bis(molybdopterin guanine dinucleotide) as cofactor.

Its pathway is nitrogen metabolism; nitrate reduction (denitrification); dinitrogen from nitrate: step 1/4. Nitrate reductase is a key enzyme involved in the first step of nitrate assimilation in plants, fungi and bacteria. This chain is Assimilatory nitrate reductase catalytic subunit (nasC), found in Bacillus subtilis (strain 168).